The primary structure comprises 419 residues: Transcription factor IIIB 50 kDa subunit (419 aa).

A TFIIB-type zinc finger spans residues 2–36; it reads PGRGRCPDCGSTELVEDSHYSQSQLVCSDCGCVVT. C7, C10, C28, and C31 together coordinate Zn(2+). 2 consecutive repeat copies span residues 72–157 and 173–249. Residues 108-114 form an interaction with target DNA region; that stretch reads AARLQKK. Basic and acidic residues predominate over residues 314–326; sequence DGTAEVETREKEP. A disordered region spans residues 314–351; that stretch reads DGTAEVETREKEPPGWGQGQGEGEVGNNSLGLPQGKRP. S353 is subject to Phosphoserine. The tract at residues 357 to 363 is required for the formation of a ternary complex with DNA and TBP; not required for interaction with TBP in the absence of DNA; that stretch reads LLPPCML. Position 361 is a cysteine sulfenic acid (-SOH) (C361). The segment at 365 to 419 is required for interaction with TBP and formation of a ternary complex with DNA and TBP; it reads SPKRICPVPPVSTVTGDENISDSEIEQYLRTPQEVRDFQRAQAARQAATSVPNPP.

It belongs to the TFIIB family. In terms of assembly, component of TFIIIB complexes. The TFIIIB complex has two activities, alpha and beta. The TFIIIB-alpha activity complex is composed of TBP, BDP1, and a complex containing both BRF2 and at least four stably associated proteins; this complex inhibits the transcription by pol III via its phosphorylation by CK2; YY1 facilitates the TFIIIB-alpha complex formation. Interacts with TBP; this interaction promotes recruitment of BRF2 to TATA box-containing promoters. Interacts with TBP and the BURE sequence (GC-rich sequence downstream from the TATA box) to form a strong ternary complex which is joined by BDP1; this ternary complex stimulates pol III transcription. Forms a trimeric complex composed of TBP, BRF2 and mini-SNAPc complex (SNAP43, SNAP50, and the N-terminal third of SNAP190) on the promoter. Assembly of the TBP-BRF2 complex is stimulated by SNAP190. Interacts with MAF1 and SNAPC4. In terms of processing, in response to oxidative stress, Cys-361 is reversibly oxidized to cysteine sulfenic acid. Oxidation of Cys-361 impairs formation of a ternary complex with TBP and DNA and down-regulates expression of target genes in response to oxidative stress.

Its subcellular location is the nucleus. In terms of biological role, general activator of RNA polymerase III transcription. Factor exclusively required for RNA polymerase III transcription of genes with promoter elements upstream of the initiation sites. Contributes to the regulation of gene expression; functions as activator in the absence of oxidative stress. Down-regulates expression of target genes in response to oxidative stress. Overexpression protects cells against apoptosis in response to oxidative stress. The sequence is that of Transcription factor IIIB 50 kDa subunit (BRF2) from Homo sapiens (Human).